Reading from the N-terminus, the 510-residue chain is tRNA-2-methylthio-N(6)-dimethylallyladenosine synthase (510 aa).

An MTTase N-terminal domain is found at 19–135 (RTFEVRTYGC…LPALLDRARH (117 aa)). Positions 28, 64, 98, 172, 176, and 179 each coordinate [4Fe-4S] cluster. The Radical SAM core domain maps to 158 to 394 (RESSYAAWVS…IELQERISLE (237 aa)). A TRAM domain is found at 397–467 (TAQIGRRVEL…PHHLIADAGL (71 aa)). The disordered stretch occupies residues 477–510 (DAHAAGQKPRTGVGLGMPAVGAPDPLPATTGCAR).

The protein belongs to the methylthiotransferase family. MiaB subfamily. As to quaternary structure, monomer. [4Fe-4S] cluster is required as a cofactor.

The protein resides in the cytoplasm. It catalyses the reaction N(6)-dimethylallyladenosine(37) in tRNA + (sulfur carrier)-SH + AH2 + 2 S-adenosyl-L-methionine = 2-methylsulfanyl-N(6)-dimethylallyladenosine(37) in tRNA + (sulfur carrier)-H + 5'-deoxyadenosine + L-methionine + A + S-adenosyl-L-homocysteine + 2 H(+). Catalyzes the methylthiolation of N6-(dimethylallyl)adenosine (i(6)A), leading to the formation of 2-methylthio-N6-(dimethylallyl)adenosine (ms(2)i(6)A) at position 37 in tRNAs that read codons beginning with uridine. This Mycolicibacterium vanbaalenii (strain DSM 7251 / JCM 13017 / BCRC 16820 / KCTC 9966 / NRRL B-24157 / PYR-1) (Mycobacterium vanbaalenii) protein is tRNA-2-methylthio-N(6)-dimethylallyladenosine synthase.